Consider the following 446-residue polypeptide: Tubulin beta chain (446 aa).

GTP contacts are provided by Gln11, Glu69, Ser138, Gly142, Thr143, Gly144, Asn204, and Asn226. A Mg(2+)-binding site is contributed by Glu69. The segment at 421–446 is disordered; it reads EYQQYQDAGIDEEEEEYEEELPEGEE. Positions 429–446 are enriched in acidic residues; the sequence is GIDEEEEEYEEELPEGEE.

It belongs to the tubulin family. Dimer of alpha and beta chains. A typical microtubule is a hollow water-filled tube with an outer diameter of 25 nm and an inner diameter of 15 nM. Alpha-beta heterodimers associate head-to-tail to form protofilaments running lengthwise along the microtubule wall with the beta-tubulin subunit facing the microtubule plus end conferring a structural polarity. Microtubules usually have 13 protofilaments but different protofilament numbers can be found in some organisms and specialized cells. Mg(2+) serves as cofactor.

It localises to the cytoplasm. The protein localises to the cytoskeleton. Functionally, tubulin is the major constituent of microtubules, a cylinder consisting of laterally associated linear protofilaments composed of alpha- and beta-tubulin heterodimers. Microtubules grow by the addition of GTP-tubulin dimers to the microtubule end, where a stabilizing cap forms. Below the cap, tubulin dimers are in GDP-bound state, owing to GTPase activity of alpha-tubulin. This is Tubulin beta chain (TUB2) from Fusarium fujikuroi (Bakanae and foot rot disease fungus).